A 219-amino-acid polypeptide reads, in one-letter code: Octanoyltransferase (219 aa).

Positions 32–207 (SSSPDQLWIV…TFSHNLGYQN (176 aa)) constitute a BPL/LPL catalytic domain. Substrate-binding positions include 71–78 (RGGQVTYH), 138–140 (SLG), and 151–153 (GLA). The Acyl-thioester intermediate role is filled by cysteine 169.

This sequence belongs to the LipB family.

The protein resides in the cytoplasm. The enzyme catalyses octanoyl-[ACP] + L-lysyl-[protein] = N(6)-octanoyl-L-lysyl-[protein] + holo-[ACP] + H(+). It participates in protein modification; protein lipoylation via endogenous pathway; protein N(6)-(lipoyl)lysine from octanoyl-[acyl-carrier-protein]: step 1/2. Functionally, catalyzes the transfer of endogenously produced octanoic acid from octanoyl-acyl-carrier-protein onto the lipoyl domains of lipoate-dependent enzymes. Lipoyl-ACP can also act as a substrate although octanoyl-ACP is likely to be the physiological substrate. The chain is Octanoyltransferase from Shewanella woodyi (strain ATCC 51908 / MS32).